An 896-amino-acid polypeptide reads, in one-letter code: MAAPGSGAPCAELCRQLLLTLVVFSFACEACKKEIFNIPSKLEADKMIGRVNLKECLGSVDRIQSSDPDFRVLEDGSVYTAHAVVLSDEKRSFTIWLSDTEKRTQKEILVLLEYQKKVLKKRHTKETVLRRSKRRWAPIPCSMQENSLGPFPLFLQQVQSDAAQNYTIFYSISGRGVDKEPLNLFFIERDTGNLYCTQPVDREEYDVFDLIAYASTADGYSADFPLPLPIRVEDENDNHPIFTEAVYNFEVPESSRVGTTVGVVCATDRDEPDTMHTRLKYSILEQTPRSPGLFSVHPSTGVITTVSHYLDREVADKYSLIMKVQDMDGQFFGLMSTATCIITVKDSNDNLPTFRQNAYEASVEENTVNVEILRIPVEDKDLINTANWRANFTILKGNENGHFKITTDKATNEGVLSVVKPLDYEESHQVVLEIGVANEAPFTRDVALRMTTMNRAVVTVHVKDQDEGPECSPEVQYIRIKENSAVGSKISGYKAYDPETKSSSGLRYKILHDPKEWITVNEGSGSLETYKTLDREVITPKNDLYNITVLAIDQDGRSCTGTLAVSIEDVNDNPPEILQDYLVICKGNMDYVDISAIDHDSSINGAPFYFSLANTSPEINRLWTITRVNDTAARLAYQKNAQFQEYFIPVAVKDRAGLSATKTLRVNLCDCTNPVQCRAARRSADVILGKWAILAILLGIALLFSILLTLVCGIVSARNKKAFPDDLAQQNLIISNTEAPGDDKVCSANGFMTQTVNNANQGFCGTMGSGVKNGGQESIEMVKGGQQTLESCRGAGHHHTLDSCRGGTIEVENSRYTYSEWQNFTQPRLGEKLHLCNQDEEHMPSQDYVLTYNYEGRGSPAGSVGCCSEKQEEDGLDFLNNLEAKFAALAKTCTKR.

A signal peptide spans 1–26 (MAAPGSGAPCAELCRQLLLTLVVFSF). A propeptide spanning residues 27-134 (ACEACKKEIF…KETVLRRSKR (108 aa)) is cleaved from the precursor. Cadherin domains are found at residues 135–242 (RWAP…HPIF), 243–354 (TEAV…LPTF), 355–471 (RQNA…GPEC), 472–579 (SPEV…EILQ), and 580–690 (DYLV…ILGK). Over 135–690 (RWAPIPCSMQ…RRSADVILGK (556 aa)) the chain is Extracellular. A glycan (N-linked (GlcNAc...) asparagine) is linked at Asn-165. N-linked (GlcNAc...) asparagine glycosylation is found at Asn-391, Asn-546, and Asn-629. Residues 691 to 711 (WAILAILLGIALLFSILLTLV) traverse the membrane as a helical segment. Topologically, residues 712 to 896 (CGIVSARNKK…AALAKTCTKR (185 aa)) are cytoplasmic.

As to quaternary structure, may form homodimers. Interacts with DSG1; there is evidence to suggest that the interaction promotes cell-cell adhesion of keratinocytes. Expressed in stratified epithelia only, such as the epidermis, tongue, esophagus and rumen (at protein level).

The protein localises to the cell membrane. Its subcellular location is the cell junction. It is found in the desmosome. The protein resides in the cytoplasm. Functionally, a component of desmosome cell-cell junctions which are required for positive regulation of cellular adhesion. Required for cell-cell adhesion in the epidermis, as a result required for the maintenance of the dermal cohesion and the dermal barrier function. Required for cell-cell adhesion of epithelial cell layers surrounding the telogen hair club, as a result plays an important role in telogen hair shaft anchorage. Essential for successful completion of embryo compaction and embryo development. This chain is Desmocollin-3 (DSC3), found in Bos taurus (Bovine).